The sequence spans 876 residues: Probable galactinol--sucrose galactosyltransferase 4 (876 aa).

Phosphoserine occurs at positions 7 and 9.

The protein belongs to the glycosyl hydrolases 36 family.

It carries out the reaction alpha-D-galactosyl-(1-&gt;3)-1D-myo-inositol + sucrose = raffinose + myo-inositol. In terms of biological role, transglycosidase operating by a ping-pong reaction mechanism. Involved in the synthesis of raffinose, a major soluble carbohydrate in seeds, roots and tubers. The polypeptide is Probable galactinol--sucrose galactosyltransferase 4 (RFS4) (Arabidopsis thaliana (Mouse-ear cress)).